An 86-amino-acid polypeptide reads, in one-letter code: Cell division topological specificity factor (86 aa).

The protein belongs to the MinE family.

Prevents the cell division inhibition by proteins MinC and MinD at internal division sites while permitting inhibition at polar sites. This ensures cell division at the proper site by restricting the formation of a division septum at the midpoint of the long axis of the cell. The protein is Cell division topological specificity factor of Stenotrophomonas maltophilia (strain K279a).